The chain runs to 74 residues: Small ribosomal subunit protein bS18 (74 aa).

Belongs to the bacterial ribosomal protein bS18 family. Part of the 30S ribosomal subunit. Forms a tight heterodimer with protein bS6.

Binds as a heterodimer with protein bS6 to the central domain of the 16S rRNA, where it helps stabilize the platform of the 30S subunit. The polypeptide is Small ribosomal subunit protein bS18 (Novosphingobium aromaticivorans (strain ATCC 700278 / DSM 12444 / CCUG 56034 / CIP 105152 / NBRC 16084 / F199)).